The chain runs to 580 residues: Xylulose kinase (580 aa).

Positions 99, 170, 280, and 281 each coordinate substrate. ATP is bound by residues W355, 441-442 (GA), and N445.

It belongs to the FGGY kinase family. As to quaternary structure, monomer.

The catalysed reaction is D-xylulose + ATP = D-xylulose 5-phosphate + ADP + H(+). In terms of biological role, phosphorylates D-xylulose to produce D-xylulose 5-phosphate, a molecule that may play an important role in the regulation of glucose metabolism and lipogenesis. The polypeptide is Xylulose kinase (XYLB) (Pongo abelii (Sumatran orangutan)).